We begin with the raw amino-acid sequence, 153 residues long: uncharacterized protein (153 aa).

It to M.jannaschii MJ1183.

This is an uncharacterized protein from Methanothermobacter thermautotrophicus (strain ATCC 29096 / DSM 1053 / JCM 10044 / NBRC 100330 / Delta H) (Methanobacterium thermoautotrophicum).